The primary structure comprises 404 residues: Schlafen-like protein 1 (404 aa).

Disordered stretches follow at residues 1–31 (MTPMKRSVQTQVSEPFTESWGEESLPELPTE) and 139–170 (GPLSHREEEEEDSGLSPGPNPGSGVPLPAWPT). Polar residues predominate over residues 7-16 (SVQTQVSEPF). The span at 152 to 165 (GLSPGPNPGSGVPL) shows a compositional bias: low complexity. Residue 258–265 (GVEDSGLV) coordinates ATP. Residues 365–395 (RWLVELGKLEERVKVLTMEKEQLQQQLQQHG) are a coiled coil.

Belongs to the Schlafen family. Subgroup I subfamily.

The sequence is that of Schlafen-like protein 1 (SLFNL1) from Macaca fascicularis (Crab-eating macaque).